Reading from the N-terminus, the 146-residue chain is Large ribosomal subunit protein uL15 (146 aa).

Residues 1–51 are disordered; it reads MKLHELQPAAGSRKVRNRVGRGTSSGNGKTSGRGQKGQKARSGGGVRLGFE. 2 stretches are compositionally biased toward gly residues: residues 23 to 35 and 42 to 51; these read TSSG…GRGQ and SGGGVRLGFE.

It belongs to the universal ribosomal protein uL15 family. Part of the 50S ribosomal subunit.

In terms of biological role, binds to the 23S rRNA. This Streptococcus sanguinis (strain SK36) protein is Large ribosomal subunit protein uL15.